Consider the following 185-residue polypeptide: MKDMVFDELKQNMEKGLQALEKSFNKVRTGRASISLLDGIKADYYGTPTPLNQVATLSVPESRQILISPWDTSALNAIEKAIQKSDLGLVPNNDGKVIRISIPPLTEARRKELVKVVRKMAEECKVKLRNARRDANEEFKSMKKNNDISEDQMHDYQDQVQKMTDSYIEKSEDILVQKEKEIMEI.

Belongs to the RRF family.

The protein localises to the cytoplasm. Its function is as follows. Responsible for the release of ribosomes from messenger RNA at the termination of protein biosynthesis. May increase the efficiency of translation by recycling ribosomes from one round of translation to another. This Syntrophus aciditrophicus (strain SB) protein is Ribosome-recycling factor.